The following is a 535-amino-acid chain: Butyrophilin-like protein 9 (535 aa).

The signal sequence occupies residues 1–34 (MVDLSVSPDSLKPVSLTSSLVFLMHLLLLQPGEP). Residues 35 to 256 (SSEVKVLGPE…VFVPGASAWK (222 aa)) are Extracellular-facing. Residues 54-135 (EVEFPCHLWP…SDKGTYGCRF (82 aa)) enclose the Ig-like V-type domain. A disulfide bridge connects residues C59 and C133. N-linked (GlcNAc...) asparagine glycans are attached at residues N102, N139, and N224. The helical transmembrane segment at 257–277 (SAFVATLPLLLVLAALALGVL) threads the bilayer. The stretch at 276–315 (VLRKQRRSREKLRKQAEKRQEKLTAELEKLQTELDWRRAE) forms a coiled coil. The Cytoplasmic portion of the chain corresponds to 278–535 (RKQRRSREKL…EPADPALDWW (258 aa)). Residues 310 to 509 (DWRRAEGQAE…LTICPLPVRG (200 aa)) form the B30.2/SPRY domain. A disordered region spans residues 340 to 367 (SLEVSEDGKSVSSRGAPPGPAPGHPQRF).

The protein belongs to the immunoglobulin superfamily. BTN/MOG family.

The protein localises to the membrane. The polypeptide is Butyrophilin-like protein 9 (BTNL9) (Homo sapiens (Human)).